Consider the following 430-residue polypeptide: MIPREIKEVLDVVLRHNRWRRWETINLIASENVMSPLAEIFYINDFGGRYAEGTIGSRYYQGTKYVDVVEEALVKEFAEVLGAKFVDVRPISGTVANLATYFALVPEGGSVASLPIRCGGHISHSNVGGLKALRIKTVELPWDLENFNVDVDAARKVLEDKRPNLVILGGSLYLFPHPIKEVAEIAKGIGAYVLHDSAHVLGLIVGGVFPNPLREGADVITSSTHKTFPGPQGGLIATNLGDDANGQIQKAVFPTFTSNYHLHRYVATYITLVEMKLFGHEYASRVVENAKALAEALAEEGVTPVAERLGFTKTHQVAVDVSKYGGGDKVAALLEEANIIVNKNALPWDRSVVKPSGIRIGVQEMTRFGMGKDEMREIAKFIARVLRGEDPASVRRDVVDFRRGFVEVKYGFKASREVIEEVFASLNLLA.

Residue 120–122 participates in (6S)-5,6,7,8-tetrahydrofolate binding; that stretch reads GHI. The residue at position 226 (Lys-226) is an N6-(pyridoxal phosphate)lysine.

It belongs to the SHMT family. In terms of assembly, homodimer. Requires pyridoxal 5'-phosphate as cofactor.

It localises to the cytoplasm. It functions in the pathway amino-acid biosynthesis; glycine biosynthesis; glycine from L-serine: step 1/1. Functionally, catalyzes the reversible interconversion of serine and glycine with a modified folate serving as the one-carbon carrier. Also exhibits a pteridine-independent aldolase activity toward beta-hydroxyamino acids, producing glycine and aldehydes, via a retro-aldol mechanism. This is Serine hydroxymethyltransferase from Pyrobaculum calidifontis (strain DSM 21063 / JCM 11548 / VA1).